Here is a 224-residue protein sequence, read N- to C-terminus: Peroxynitrite isomerase 2 (224 aa).

Positions 71 to 77 match the GXWXGXG motif; sequence GVWRGEG. The heme b site is built by Lys187 and His214.

Belongs to the nitrobindin family. As to quaternary structure, homodimer. The cofactor is heme b.

It catalyses the reaction peroxynitrite = nitrate. The protein operates within nitrogen metabolism. Heme-binding protein able to scavenge peroxynitrite and to protect free L-tyrosine against peroxynitrite-mediated nitration, by acting as a peroxynitrite isomerase that converts peroxynitrite to nitrate. Therefore, this protein likely plays a role in peroxynitrite sensing and in the detoxification of reactive nitrogen and oxygen species (RNS and ROS, respectively). Is able to bind nitric oxide (NO) in vitro, but may act as a sensor of peroxynitrite levels in vivo. In Mycobacterium sp. (strain JLS), this protein is Peroxynitrite isomerase 2.